Consider the following 627-residue polypeptide: CTP synthase (627 aa).

In terms of domain architecture, Glutamine amidotransferase type-1 spans 300-554 (CIAVVGKYTK…LASVDRLNQY (255 aa)). Active-site for GATase activity residues include C399, H526, and E528. Phosphoserine is present on residues S567, S570, S571, and S588. T595 carries the phosphothreonine modification. Over residues 599–613 (GISKSCNGSISTSDS) the composition is skewed to polar residues. The segment at 599–627 (GISKSCNGSISTSDSEGACGGVDPTNGHK) is disordered.

The protein belongs to the CTP synthase family. In terms of tissue distribution, in ovary, expressed in oocytes, follicle cells and nurse cells. Also expressed in larval and adult testis (at protein level). In larvae, expressed in lymph gland, salivary gland, regions of the midgut, testis, optical lobe and trachea. Isoform 1 is expressed in adult testis, ovary, accessory gland and head. Isoform 2 is weakly expressed in ovary.

The protein resides in the cytoplasm. The catalysed reaction is UTP + L-glutamine + ATP + H2O = CTP + L-glutamate + ADP + phosphate + 2 H(+). Its pathway is pyrimidine metabolism; CTP biosynthesis via de novo pathway; CTP from UDP: step 2/2. Functionally, catalyzes the ATP-dependent amination of UTP to CTP with either L-glutamine or ammonia as the source of nitrogen. Constitutes the rate-limiting enzyme in the synthesis of cytosine nucleotides. In terms of biological role, required for assembly of cytoophidium in female germline cells. In nurse cells, CTPsyn filament assembly in the cytoophidium is regulated by Ack kinase which may thereby contribute to the control of CTP production at specific stages of oogenesis and development of the nurse cell membrane. The polypeptide is CTP synthase (Drosophila melanogaster (Fruit fly)).